The primary structure comprises 605 residues: Pescadillo homolog (605 aa).

Residues 51–484 (KANKGSTAPT…GEEEESESES (434 aa)) are sufficient for interaction with ERB1. The residue at position 288 (Ser288) is a Phosphoserine. Residues 294–342 (LKSALNADEANTDETEKEEEQEKKQEKEQEKEQNEETELDTFEDNNKNK) adopt a coiled-coil conformation. Residues 297-342 (ALNADEANTDETEKEEEQEKKQEKEQEKEQNEETELDTFEDNNKNK) form a disordered region. Residues 303-312 (ANTDETEKEE) show a composition bias toward acidic residues. A Phosphothreonine modification is found at Thr308. Over residues 313 to 327 (EQEKKQEKEQEKEQN) the composition is skewed to basic and acidic residues. A BRCT domain is found at 355–449 (PVASLFSAFV…ELVPANKYLP (95 aa)). The disordered stretch occupies residues 459–605 (PWGDAIGYDP…AKLNKLDSKK (147 aa)). The segment covering 473–510 (EEGEEEESESESESEDQVEEEDQEVVAGEEDDDDDEEL) has biased composition (acidic residues). Residues 530 to 605 (EADKDVNKSK…AKLNKLDSKK (76 aa)) adopt a coiled-coil conformation. Over residues 562–571 (KQKKLYKKMK) the composition is skewed to basic residues. Basic and acidic residues predominate over residues 575-584 (AKKEEQAENL). Positions 585–598 (KKKKKQIAKQKAKL) are enriched in basic residues.

The protein belongs to the pescadillo family. Component of the NOP7 complex, composed of ERB1, NOP7 and YTM1. The complex is held together by ERB1, which interacts with NOP7 via its N-terminal domain and with YTM1 via a high-affinity interaction between the seven-bladed beta-propeller domains of the 2 proteins. The NOP7 complex associates with the 66S pre-ribosome.

The protein resides in the nucleus. The protein localises to the nucleolus. It localises to the nucleoplasm. Component of the NOP7 complex, which is required for maturation of the 25S and 5.8S ribosomal RNAs and formation of the 60S ribosome. The polypeptide is Pescadillo homolog (Saccharomyces cerevisiae (strain YJM789) (Baker's yeast)).